A 274-amino-acid chain; its full sequence is Tryptase beta-2 (274 aa).

Residues 1-19 (MLKLLLLLALSPLASLVHA) form the signal peptide. Positions 20-29 (APCPVKQRVG) are cleaved as a propeptide — activation peptide. The Peptidase S1 domain occupies 30–271 (IVGGREASES…YLDWIHRYVP (242 aa)). Cysteine 58 and cysteine 74 are oxidised to a cystine. Histidine 73 (charge relay system) is an active-site residue. Tyrosine 96 carries the post-translational modification Phosphotyrosine. N-linked (GlcNAc...) asparagine glycosylation occurs at asparagine 104. Aspartate 120 acts as the Charge relay system in catalysis. A glycan (N-linked (GlcNAc...) asparagine) is linked at asparagine 131. 3 disulfide bridges follow: cysteine 154–cysteine 229, cysteine 187–cysteine 210, and cysteine 219–cysteine 247. Serine 223 acts as the Charge relay system in catalysis.

The protein belongs to the peptidase S1 family. Tryptase subfamily. In terms of assembly, homotetramer. The active tetramer is converted to inactive monomers at neutral and acidic pH in the absence of heparin. Low concentrations of inactive monomers become active monomers at pH 6.0 in the presence of heparin. When the concentration of active monomers is higher, they convert to active monomers and then to active tetramers. These monomers are active and functionally distinct from the tetrameric enzyme. In contrast to the hidden active sites in the tetrameric form, the active site of the monomeric form is accessible for macromolecular proteins and inhibitors, e.g. fibrinogen which is a substrate for the monomeric but not for the tetrameric form. The monomeric form forms a complex with SERPINB6.

The protein localises to the secreted. The enzyme catalyses Preferential cleavage: Arg-|-Xaa, Lys-|-Xaa, but with more restricted specificity than trypsin.. Tryptase is the major neutral protease present in mast cells and is secreted upon the coupled activation-degranulation response of this cell type. Plays a role in innate immunity. This Rattus norvegicus (Rat) protein is Tryptase beta-2 (Tpsb2).